Reading from the N-terminus, the 553-residue chain is Dihydroxy-acid dehydratase 1 (553 aa).

Asp78 is a binding site for Mg(2+). A [2Fe-2S] cluster-binding site is contributed by Cys119. Mg(2+) contacts are provided by Asp120 and Lys121. An N6-carboxylysine modification is found at Lys121. Cys191 is a binding site for [2Fe-2S] cluster. Residue Glu444 participates in Mg(2+) binding. Ser470 functions as the Proton acceptor in the catalytic mechanism.

The protein belongs to the IlvD/Edd family. In terms of assembly, homodimer. The cofactor is [2Fe-2S] cluster. Mg(2+) serves as cofactor.

It catalyses the reaction (2R)-2,3-dihydroxy-3-methylbutanoate = 3-methyl-2-oxobutanoate + H2O. The catalysed reaction is (2R,3R)-2,3-dihydroxy-3-methylpentanoate = (S)-3-methyl-2-oxopentanoate + H2O. It functions in the pathway amino-acid biosynthesis; L-isoleucine biosynthesis; L-isoleucine from 2-oxobutanoate: step 3/4. The protein operates within amino-acid biosynthesis; L-valine biosynthesis; L-valine from pyruvate: step 3/4. Its function is as follows. Functions in the biosynthesis of branched-chain amino acids. Catalyzes the dehydration of (2R,3R)-2,3-dihydroxy-3-methylpentanoate (2,3-dihydroxy-3-methylvalerate) into 2-oxo-3-methylpentanoate (2-oxo-3-methylvalerate) and of (2R)-2,3-dihydroxy-3-methylbutanoate (2,3-dihydroxyisovalerate) into 2-oxo-3-methylbutanoate (2-oxoisovalerate), the penultimate precursor to L-isoleucine and L-valine, respectively. The sequence is that of Dihydroxy-acid dehydratase 1 from Methanosarcina acetivorans (strain ATCC 35395 / DSM 2834 / JCM 12185 / C2A).